The sequence spans 133 residues: Large ribosomal subunit protein uL15 (133 aa).

The disordered stretch occupies residues 1-58; it reads MALQNLTPAPGSTHATKRLGRGQGSGNGKTAGKGNKGQRARKGYNEKRGFEGGQQPLQ. Positions 21-35 are enriched in gly residues; it reads RGQGSGNGKTAGKGN.

The protein belongs to the universal ribosomal protein uL15 family. Part of the 50S ribosomal subunit.

Its function is as follows. Binds to the 23S rRNA. The sequence is that of Large ribosomal subunit protein uL15 from Campylobacter curvus (strain 525.92).